An 861-amino-acid polypeptide reads, in one-letter code: Conserved oligomeric Golgi complex subunit 4 (861 aa).

Belongs to the COG4 family. In terms of assembly, component of the conserved oligomeric Golgi (COG or Sec34/Sec35) complex which consists of eight different proteins COG1-COG8.

It is found in the golgi apparatus membrane. Acts as essential component of the peripheral membrane COG complex that is involved in intra-Golgi protein trafficking. COG is located at the cis-Golgi, and regulates tethering of retrograde intra-Golgi vesicles and possibly a number of other membrane trafficking events. Possesses ATPase activity. The sequence is that of Conserved oligomeric Golgi complex subunit 4 (COG4) from Saccharomyces cerevisiae (strain ATCC 204508 / S288c) (Baker's yeast).